We begin with the raw amino-acid sequence, 385 residues long: Putative actin-25 (385 aa).

Belongs to the actin family.

The protein resides in the cytoplasm. Its subcellular location is the cytoskeleton. The enzyme catalyses ATP + H2O = ADP + phosphate + H(+). Functionally, actins are highly conserved proteins that are involved in various types of cell motility and are ubiquitously expressed in all eukaryotic cells. Multiple isoforms are involved in various cellular functions such as cytoskeleton structure, cell mobility, chromosome movement and muscle contraction. This chain is Putative actin-25 (act25), found in Dictyostelium discoideum (Social amoeba).